A 767-amino-acid chain; its full sequence is 5-methyltetrahydropteroyltriglutamate--homocysteine methyltransferase (767 aa).

Lysine 126 is a binding site for 5-methyltetrahydropteroyltri-L-glutamate. Residues 445 to 447 (IGS) and glutamate 498 contribute to the L-homocysteine site. Residues 445–447 (IGS) and glutamate 498 each bind L-methionine. Residues 529-530 (RC) and tryptophan 575 contribute to the 5-methyltetrahydropteroyltri-L-glutamate site. Aspartate 613 contacts L-homocysteine. Aspartate 613 is a binding site for L-methionine. Glutamate 619 lines the 5-methyltetrahydropteroyltri-L-glutamate pocket. Zn(2+)-binding residues include histidine 655, cysteine 657, and glutamate 679. The Proton donor role is filled by histidine 708. Residue cysteine 740 participates in Zn(2+) binding.

It belongs to the vitamin-B12 independent methionine synthase family. Zn(2+) is required as a cofactor.

It catalyses the reaction 5-methyltetrahydropteroyltri-L-glutamate + L-homocysteine = tetrahydropteroyltri-L-glutamate + L-methionine. Its pathway is amino-acid biosynthesis; L-methionine biosynthesis via de novo pathway; L-methionine from L-homocysteine (MetE route): step 1/1. In terms of biological role, catalyzes the transfer of a methyl group from 5-methyltetrahydrofolate to homocysteine resulting in methionine formation. This Psychromonas ingrahamii (strain DSM 17664 / CCUG 51855 / 37) protein is 5-methyltetrahydropteroyltriglutamate--homocysteine methyltransferase.